The chain runs to 948 residues: Bifunctional glutamine synthetase adenylyltransferase/adenylyl-removing enzyme (948 aa).

An adenylyl removase region spans residues 1 to 444 (MSLPSALLPT…VFATLIGEED (444 aa)). The tract at residues 452 to 948 (ARHFHELWDM…VIQAWQQWLG (497 aa)) is adenylyl transferase.

It belongs to the GlnE family. The cofactor is Mg(2+).

The catalysed reaction is [glutamine synthetase]-O(4)-(5'-adenylyl)-L-tyrosine + phosphate = [glutamine synthetase]-L-tyrosine + ADP. It carries out the reaction [glutamine synthetase]-L-tyrosine + ATP = [glutamine synthetase]-O(4)-(5'-adenylyl)-L-tyrosine + diphosphate. In terms of biological role, involved in the regulation of glutamine synthetase GlnA, a key enzyme in the process to assimilate ammonia. When cellular nitrogen levels are high, the C-terminal adenylyl transferase (AT) inactivates GlnA by covalent transfer of an adenylyl group from ATP to specific tyrosine residue of GlnA, thus reducing its activity. Conversely, when nitrogen levels are low, the N-terminal adenylyl removase (AR) activates GlnA by removing the adenylyl group by phosphorolysis, increasing its activity. The regulatory region of GlnE binds the signal transduction protein PII (GlnB) which indicates the nitrogen status of the cell. The chain is Bifunctional glutamine synthetase adenylyltransferase/adenylyl-removing enzyme from Vibrio cholerae serotype O1 (strain ATCC 39315 / El Tor Inaba N16961).